The chain runs to 208 residues: MAKGILGTKLGMTQIFNESGEVVPVTVVSVEGNVVLQLKTMEVDGYEAVQLGFGDIKEGRQNKPQKGHAAKASATPKRFIKEIRTSVTDFEIGQEIKADTFAAGEMVDVTGTSKGKGFAGAIKRHNQSRGPMAHGSRYHRRPGSMGPVAPNRVFKGKLLPGRMGGEQVTVQNLEIVKVDVERGLLLVKGAIPGARKSQVVVKTAVKGN.

The interval 126–150 (NQSRGPMAHGSRYHRRPGSMGPVAP) is disordered.

This sequence belongs to the universal ribosomal protein uL3 family. As to quaternary structure, part of the 50S ribosomal subunit. Forms a cluster with proteins L14 and L19.

Functionally, one of the primary rRNA binding proteins, it binds directly near the 3'-end of the 23S rRNA, where it nucleates assembly of the 50S subunit. The protein is Large ribosomal subunit protein uL3 of Exiguobacterium sibiricum (strain DSM 17290 / CCUG 55495 / CIP 109462 / JCM 13490 / 255-15).